A 76-amino-acid chain; its full sequence is Sec-independent protein translocase protein TatA (76 aa).

Residues 1-21 (MGGLSIWHWLIVLLIVALVFG) traverse the membrane as a helical segment. A disordered region spans residues 43 to 76 (MKEGEAPADAQQLPRSGSVDVNAKETTRSDSNKA). Positions 64-76 (NAKETTRSDSNKA) are enriched in basic and acidic residues.

It belongs to the TatA/E family. The Tat system comprises two distinct complexes: a TatABC complex, containing multiple copies of TatA, TatB and TatC subunits, and a separate TatA complex, containing only TatA subunits. Substrates initially bind to the TatABC complex, which probably triggers association of the separate TatA complex to form the active translocon.

Its subcellular location is the cell inner membrane. Part of the twin-arginine translocation (Tat) system that transports large folded proteins containing a characteristic twin-arginine motif in their signal peptide across membranes. TatA could form the protein-conducting channel of the Tat system. This Burkholderia lata (strain ATCC 17760 / DSM 23089 / LMG 22485 / NCIMB 9086 / R18194 / 383) protein is Sec-independent protein translocase protein TatA.